Here is a 90-residue protein sequence, read N- to C-terminus: U7-theraphotoxin-Hhn1e (90 aa).

The first 19 residues, Met1–Ser19, serve as a signal peptide directing secretion. The propeptide occupies Phe20–Glu50. 3 disulfide bridges follow: Cys51-Cys65, Cys58-Cys70, and Cys64-Cys81.

This sequence belongs to the neurotoxin 10 (Hwtx-1) family. 13 (Hntx-13) subfamily. Expressed by the venom gland.

It localises to the secreted. In terms of biological role, ion channel inhibitor. In Cyriopagopus hainanus (Chinese bird spider), this protein is U7-theraphotoxin-Hhn1e.